The following is a 434-amino-acid chain: Citrate synthase (434 aa).

Catalysis depends on residues H310 and D368.

The protein belongs to the citrate synthase family.

It catalyses the reaction oxaloacetate + acetyl-CoA + H2O = citrate + CoA + H(+). It functions in the pathway carbohydrate metabolism; tricarboxylic acid cycle; isocitrate from oxaloacetate: step 1/2. This chain is Citrate synthase (gltA), found in Bradyrhizobium diazoefficiens (strain JCM 10833 / BCRC 13528 / IAM 13628 / NBRC 14792 / USDA 110).